Here is a 234-residue protein sequence, read N- to C-terminus: Transcriptional regulatory protein WalR (234 aa).

The region spanning 3-116 (KILIVDDEKP…ELQARVKALL (114 aa)) is the Response regulatory domain. A 4-aspartylphosphate modification is found at D52. Residues 133–232 (PQPIQIGDLE…RRGVGYYMRN (100 aa)) constitute a DNA-binding region (ompR/PhoB-type).

As to quaternary structure, monomer. Homodimer. Post-translationally, phosphorylated by WalK; can also be dephosphorylated by WalK.

Its subcellular location is the cytoplasm. In terms of biological role, member of the two-component regulatory system WalK/WalR that regulates genes involved in cell wall metabolism. Binds to the promoter region of the transcription factor fabT gene in the fabTH-acp operon in vitro. Inhibits transcription of fabT, probably acting in an unphosphorylated form, thereby playing a role in the regulation of fatty acid biosynthesis. Essential for normal growth in vitro. Required for maintaining normal cellular morphology, acting, at least in part, by regulating peptidoglycan hydrolase pcsB. Involved in maintaining expression of WalRK regulon genes in exponentially growing cells. This Streptococcus pneumoniae serotype 2 (strain D39 / NCTC 7466) protein is Transcriptional regulatory protein WalR.